We begin with the raw amino-acid sequence, 226 residues long: Endonuclease NucS (226 aa).

This sequence belongs to the NucS endonuclease family.

It localises to the cytoplasm. Cleaves both 3' and 5' ssDNA extremities of branched DNA structures. This chain is Endonuclease NucS, found in Mycobacterium ulcerans (strain Agy99).